A 756-amino-acid polypeptide reads, in one-letter code: Disintegrin and metalloproteinase domain-containing protein 5 (756 aa).

Positions 1–16 (MFLLLVLLTGLGGMHA) are cleaved as a signal peptide. A propeptide spanning residues 17 to 142 (DLNPHKTFLQ…AVSGFIHKIY (126 aa)) is cleaved from the precursor. Over 17–698 (DLNPHKTFLQ…GRHAPFQKQR (682 aa)) the chain is Extracellular. The Peptidase M12B domain occupies 183–380 (RYIEMHIVVD…NGLTCLQTNP (198 aa)). Cystine bridges form between Cys292–Cys375, Cys334–Cys359, Cys336–Cys341, and Cys449–Cys470. One can recognise a Disintegrin domain in the interval 389–478 (RRICGNGLLE…YCLLDTYVRD (90 aa)). Residue Asn559 is glycosylated (N-linked (GlcNAc...) asparagine). An EGF-like domain is found at 630-664 (DFETCEASIECSGHGICNNFNHCHCEKGYNPPHCK). 3 disulfides stabilise this stretch: Cys634/Cys646, Cys640/Cys652, and Cys654/Cys663. Residues 699 to 719 (FQLIFYISLPVLIITTAILIK) traverse the membrane as a helical segment. The Cytoplasmic segment spans residues 720-756 (RKKLRELCYRGETESESSVSQESSSNSKSSLSESTSL). Residues 731-756 (ETESESSVSQESSSNSKSSLSESTSL) form a disordered region. Low complexity predominate over residues 735-756 (ESSVSQESSSNSKSSLSESTSL).

Interacts with TEX101. In terms of processing, subject to proteolytic processing during epididymal transit of spermatozoa. Detected in testis (at protein level). Detected in adult and prepubertal testis. Detected at very low levels in heart, kidney, brain, muscle ovary and uterus.

It is found in the membrane. This is a non catalytic metalloprotease-like protein. May play a role in sperm-egg fusion. The chain is Disintegrin and metalloproteinase domain-containing protein 5 (ADAM5) from Macaca fascicularis (Crab-eating macaque).